A 210-amino-acid polypeptide reads, in one-letter code: Urease accessory protein UreF (210 aa).

It belongs to the UreF family. In terms of assembly, ureD, UreF and UreG form a complex that acts as a GTP-hydrolysis-dependent molecular chaperone, activating the urease apoprotein by helping to assemble the nickel containing metallocenter of UreC. The UreE protein probably delivers the nickel.

The protein resides in the cytoplasm. Required for maturation of urease via the functional incorporation of the urease nickel metallocenter. In Cereibacter sphaeroides (strain KD131 / KCTC 12085) (Rhodobacter sphaeroides), this protein is Urease accessory protein UreF.